A 165-amino-acid chain; its full sequence is Cyclic pyranopterin monophosphate synthase (165 aa).

Residues 76–78 (LCH) and 114–115 (ME) each bind substrate. Residue Asp129 is part of the active site.

The protein belongs to the MoaC family. In terms of assembly, homohexamer; trimer of dimers.

The catalysed reaction is (8S)-3',8-cyclo-7,8-dihydroguanosine 5'-triphosphate = cyclic pyranopterin phosphate + diphosphate. Its pathway is cofactor biosynthesis; molybdopterin biosynthesis. Its function is as follows. Catalyzes the conversion of (8S)-3',8-cyclo-7,8-dihydroguanosine 5'-triphosphate to cyclic pyranopterin monophosphate (cPMP). This chain is Cyclic pyranopterin monophosphate synthase, found in Brucella abortus (strain 2308).